Reading from the N-terminus, the 355-residue chain is Vacuolar protein sorting-associated protein 37C (355 aa).

S29 carries the post-translational modification Phosphoserine. Residues 78-167 (VERCQEQKAK…RKPRASQELA (90 aa)) form the VPS37 C-terminal domain. The segment at 159–355 (KPRASQELAG…PPPGPAWPGY (197 aa)) is disordered. Pro residues-rich tracts occupy residues 170-186 (APPPRPPPPVRPVPQGT) and 194-205 (PQPPSAMPPYPL). The segment covering 246–257 (PAAQPGPRGAAG) has biased composition (low complexity). The span at 321 to 355 (PGQPQPSVPLQPPYPPGPAPPYGFPPPPGPAWPGY) shows a compositional bias: pro residues.

The protein belongs to the VPS37 family. As to quaternary structure, component of the ESCRT-I complex (endosomal sorting complex required for transport I) which consists of TSG101, VPS28, a VPS37 protein (VPS37A to -D) and MVB12A or MVB12B in a 1:1:1:1 stoichiometry. Interacts with TSG101, VPS28, MVB12A and MVB12B. Component of the ESCRT-I complex (endosomal sorting complex required for transport I) which consists of TSG101, VPS28, a VPS37 protein (VPS37A to -D) and UBAP1 in a 1:1:1:1 stoichiometry. Interacts with HGS and STAM2. Interacts with CEP55. In terms of processing, phosphorylated by TBK1.

It is found in the late endosome membrane. Component of the ESCRT-I complex, a regulator of vesicular trafficking process. Required for the sorting of endocytic ubiquitinated cargos into multivesicular bodies. May be involved in cell growth and differentiation. The protein is Vacuolar protein sorting-associated protein 37C (VPS37C) of Pongo abelii (Sumatran orangutan).